The chain runs to 463 residues: Glutamate-1-semialdehyde 2,1-aminomutase, chloroplastic (463 aa).

A chloroplast-targeting transit peptide spans 1-30 (MQMQLNAKTVQGAFKAQRPRSVRGNVAVRA). Position 303 is an N6-(pyridoxal phosphate)lysine (Lys303).

The protein belongs to the class-III pyridoxal-phosphate-dependent aminotransferase family. HemL subfamily. In terms of assembly, homodimer. Pyridoxal 5'-phosphate serves as cofactor.

It is found in the plastid. The protein resides in the chloroplast. It catalyses the reaction (S)-4-amino-5-oxopentanoate = 5-aminolevulinate. It participates in porphyrin-containing compound metabolism; protoporphyrin-IX biosynthesis; 5-aminolevulinate from L-glutamyl-tRNA(Glu): step 2/2. Its pathway is porphyrin-containing compound metabolism; chlorophyll biosynthesis. The polypeptide is Glutamate-1-semialdehyde 2,1-aminomutase, chloroplastic (GSA) (Chlamydomonas reinhardtii (Chlamydomonas smithii)).